The chain runs to 415 residues: Cell division control protein 11 (415 aa).

An N-acetylserine modification is found at Ser-2. Position 2 is a phosphoserine (Ser-2). Positions 12–19 (RKRKHLKR) match the Basic motif motif. The Septin-type G domain maps to 19–298 (RGITFTVMIV…ERYRTEALSG (280 aa)). The G1 motif stretch occupies residues 29–36 (GQSGSGRS). GTP contacts are provided by residues 29 to 36 (GQSGSGRS), Gly-92, 172 to 180 (KSDSLTRDE), Gly-230, and Arg-247. The interval 89-92 (DTPG) is G3 motif. Positions 171 to 174 (SKSD) are G4 motif. Residue Ser-305 is modified to Phosphoserine. A disordered region spans residues 307 to 360 (RPNLTKLNGSSSSSTTTRRNTNPFKQSNNINNDVLNPASDMHGQSTGENNETYM). Residues 316-328 (SSSSSTTTRRNTN) show a composition bias toward low complexity. Thr-327 is subject to Phosphothreonine. 2 stretches are compositionally biased toward polar residues: residues 329–340 (PFKQSNNINNDV) and 348–359 (HGQSTGENNETY). Positions 354 to 414 (ENNETYMTRE…LEKEAKIKQE (61 aa)) form a coiled coil. A Glycyl lysine isopeptide (Lys-Gly) (interchain with G-Cter in SUMO) cross-link involves residue Lys-412.

The protein belongs to the TRAFAC class TrmE-Era-EngA-EngB-Septin-like GTPase superfamily. Septin GTPase family. As to quaternary structure, component of the septin complex which consists of CDC3, CDC10, CDC11, CDC12 and probably SHS1 and rearranges to a cortical collar of highly ordered filaments at the mother-bud-neck. A complex formed by CDC3, CDC10, CDC11 and CDC12 is capable of forming long filaments in vitro and the components seem to be present in a 2:2:2:2 arrangement in vivo. The filaments are proposed to be formed by the end-to-end polymerization of CDC3-CDC12-CDC11 complexes with CDC10 serving as a bridge to bundle the polymers into paired filaments. Component of the GIN4 complex composed of at least BNI5, CDC3, CDC10, CDC11, CDC12, GIN4, NAP1 and SHS1. Self-associates. Interacts with BEM4, KCC4, SPR28 and SYP1. Interacts with BNI5. In terms of processing, sumoylated during mitosis on the mother cell side of the bud neck. Sumoylation probably plays a central role in regulating septin ring disassembly during the cell cycle.

The protein localises to the membrane. It localises to the bud neck. In terms of biological role, septins are GTPases involved in cytokinesis that assemble early in the cell cycle as a patch at the incipient bud site and form a ring approximate 15 minutes before bud emergence, which transforms into an hour-glass shaped collar of cortical filaments that spans both sides of the mother-bud neck. This collar persists until just before cytokinesis, when it splits into two rings that occupy opposite sides of the neck. The septins at the bud neck serve as a structural scaffold that recruits different components involved in diverse processes at specific stages during the cell cycle. Many proteins bind asymmetrically to the septin collar. The septin assembly is regulated by protein kinases GIN4 and/or CLA4. May act by recruiting MYO1 and HOF1, a protein involved in septation, to the site of cleavage. Septins are also involved in cell morphogenesis, bud site selection, chitin deposition, cell cycle regulation, cell compartmentalization and spore wall formation. CDCd11 with SHS1 11 are involved in the recruitment of BNI5 and thereby ensure efficient localization at the bud neck of MYO1, the type II myosin of the actomyosin contractile ring. The sequence is that of Cell division control protein 11 from Saccharomyces cerevisiae (strain ATCC 204508 / S288c) (Baker's yeast).